A 157-amino-acid chain; its full sequence is Urease accessory protein UreE (157 aa).

The protein belongs to the UreE family.

The protein localises to the cytoplasm. In terms of biological role, involved in urease metallocenter assembly. Binds nickel. Probably functions as a nickel donor during metallocenter assembly. The sequence is that of Urease accessory protein UreE from Corynebacterium glutamicum (strain R).